Here is a 386-residue protein sequence, read N- to C-terminus: N-acetylneuraminate epimerase (386 aa).

A signal peptide spans 1 to 29; it reads MGMQMKNFKKMMTLMALCFSVAITTSGYA. Kelch repeat units lie at residues 51–95, 97–149, 151–186, 187–232, 235–284, 306–355, and 357–386; these read VIYV…VFLN, ELYV…VKLN, TMVL…KVIY, NYFN…VMGN, LMLI…LAGA, QNYT…SYGD, and VFLI…LLIK. Glutamate 241 (proton acceptor) is an active-site residue.

The protein belongs to the NanM family. Homodimer.

It localises to the periplasm. It carries out the reaction N-acetyl-alpha-neuraminate = N-acetyl-beta-neuraminate. In terms of biological role, converts alpha-N-acetylneuranimic acid (Neu5Ac) to the beta-anomer, accelerating the equilibrium between the alpha- and beta-anomers. Probably facilitates sialidase-negative bacteria to compete successfully for limited amounts of extracellular Neu5Ac, which is likely taken up in the beta-anomer. In addition, the rapid removal of sialic acid from solution might be advantageous to the bacterium to damp down host responses. This is N-acetylneuraminate epimerase from Salmonella typhimurium (strain LT2 / SGSC1412 / ATCC 700720).